The primary structure comprises 362 residues: Putative HLA class I histocompatibility antigen, alpha chain H (362 aa).

Positions 1-24 are cleaved as a signal peptide; it reads MVLMAPRTLLLLLSGALALTQTWA. Residues 25-114 are alpha-1; the sequence is RSHSMRYFYT…ALRYYNQSEG (90 aa). Residues 25-308 are Extracellular-facing; the sequence is RSHSMRYFYT…EPSSQPTVPI (284 aa). The N-linked (GlcNAc...) asparagine glycan is linked to asparagine 110. Residues 115-206 are alpha-2; sequence GSHTMQVMYG…ENGKETLQRA (92 aa). The segment at 207–298 is alpha-3; the sequence is DPPKTHMTHH…GLPEPLTLRW (92 aa). The 89-residue stretch at 209–297 folds into the Ig-like C1-type domain; sequence PKTHMTHHPI…EGLPEPLTLR (89 aa). Cysteine 227 and cysteine 283 form a disulfide bridge. A connecting peptide region spans residues 299 to 308; the sequence is EPSSQPTVPI. The helical transmembrane segment at 309–332 threads the bilayer; it reads VGIVAGLVLLVAVVTGAVVAAVMW. Topologically, residues 333–362 are cytoplasmic; it reads RKKSSDRKGGSYSQAASSNSAQGSDVSLTA. The tract at residues 337–362 is disordered; that stretch reads SDRKGGSYSQAASSNSAQGSDVSLTA. Residues 342–356 are compositionally biased toward low complexity; the sequence is GSYSQAASSNSAQGS.

The protein belongs to the MHC class I family. Heterodimer of an alpha chain and a beta chain (beta-2-microglobulin).

Its subcellular location is the cell membrane. Functionally, involved in the presentation of foreign antigens to the immune system. This chain is Putative HLA class I histocompatibility antigen, alpha chain H (HLA-H), found in Homo sapiens (Human).